Here is a 106-residue protein sequence, read N- to C-terminus: Small ribosomal subunit protein uS10 (106 aa).

This sequence belongs to the universal ribosomal protein uS10 family. As to quaternary structure, part of the 30S ribosomal subunit.

Its function is as follows. Involved in the binding of tRNA to the ribosomes. This chain is Small ribosomal subunit protein uS10, found in Pyrobaculum aerophilum (strain ATCC 51768 / DSM 7523 / JCM 9630 / CIP 104966 / NBRC 100827 / IM2).